A 96-amino-acid chain; its full sequence is NADH-ubiquinone oxidoreductase chain 4L (96 aa).

The next 3 membrane-spanning stretches (helical) occupy residues 1 to 21 (MPTT…SLQR), 27 to 47 (LLLT…LWAL), and 57 to 77 (APLI…SLMI).

It belongs to the complex I subunit 4L family.

The protein localises to the mitochondrion membrane. The enzyme catalyses a ubiquinone + NADH + 5 H(+)(in) = a ubiquinol + NAD(+) + 4 H(+)(out). Core subunit of the mitochondrial membrane respiratory chain NADH dehydrogenase (Complex I) which catalyzes electron transfer from NADH through the respiratory chain, using ubiquinone as an electron acceptor. Part of the enzyme membrane arm which is embedded in the lipid bilayer and involved in proton translocation. The chain is NADH-ubiquinone oxidoreductase chain 4L (MT-ND4L) from Petromyzon marinus (Sea lamprey).